The following is a 225-amino-acid chain: MAEKRAEKRKFNTDSWEPKTQVGRMVKEGTISDISYIMDKGLPLLEPEIVDVLLPDLEEQVLDVKLVQRMHKSGRRARYRATVVVGNKNGYVGVGMGKSKEVGPAIRKAIAQAKLSLIKVRVGCGSWECGCGSPHSIPFTAKGTCGSVKVELLPAPRGVGLVAGNVAKAVLGLAGVKDAWTTTYGDTRTTYNFAEATFDALNNLNFVRCLPEQKAKLGLTEGRVL.

The S5 DRBM domain maps to 57-120; sequence LEEQVLDVKL…AQAKLSLIKV (64 aa).

Belongs to the universal ribosomal protein uS5 family. As to quaternary structure, part of the 30S ribosomal subunit. Contacts protein S4.

Its function is as follows. With S4 and S12 plays an important role in translational accuracy. The protein is Small ribosomal subunit protein uS5 of Methanococcus vannielii (strain ATCC 35089 / DSM 1224 / JCM 13029 / OCM 148 / SB).